The sequence spans 125 residues: CLAVATA3/ESR (CLE)-related protein ESR3 (125 aa).

The N-terminal stretch at 1–26 (MASRMGMVAIMSLFVYAIVVPTSVNA) is a signal peptide. Residues 45-125 (QQQGGFIGHR…IGPPPLPDRY (81 aa)) are disordered. Residues proline 75 and proline 78 each carry the hydroxyproline modification. The O-linked (Ara...) hydroxyproline glycan is linked to proline 78.

Belongs to the CLV3/ESR signal peptide family. In terms of processing, the O-glycosylation (arabinosylation) of the hydroxyproline Pro-78 enhances binding affinity of the ESR3p peptide for its receptor. In terms of tissue distribution, seed endosperm.

It is found in the secreted. The protein resides in the extracellular space. Extracellular signal peptide that regulates cell fate. This chain is CLAVATA3/ESR (CLE)-related protein ESR3, found in Zea mays (Maize).